A 105-amino-acid polypeptide reads, in one-letter code: Fe-S protein maturation auxiliary factor PG_1777 (105 aa).

Belongs to the Fe-S cluster assembly domain superfamily. MIP18-like family. In terms of assembly, putative homodimer; may be disulfide-linked.

In terms of biological role, iron binding protein that protects DNA from Fenton chemistry-mediated damage caused by hydrogen peroxide induced oxidative stress. May be involved in iron-sulfur cluster assembly. The protein is Fe-S protein maturation auxiliary factor PG_1777 of Porphyromonas gingivalis (strain ATCC BAA-308 / W83).